The primary structure comprises 255 residues: Triosephosphate isomerase (255 aa).

A substrate-binding site is contributed by 9-11 (NWK). Histidine 95 (electrophile) is an active-site residue. Glutamate 167 acts as the Proton acceptor in catalysis. Residues glycine 173, serine 212, and 233–234 (GG) each bind substrate.

The protein belongs to the triosephosphate isomerase family. Homodimer.

It is found in the cytoplasm. The enzyme catalyses D-glyceraldehyde 3-phosphate = dihydroxyacetone phosphate. Its pathway is carbohydrate biosynthesis; gluconeogenesis. It functions in the pathway carbohydrate degradation; glycolysis; D-glyceraldehyde 3-phosphate from glycerone phosphate: step 1/1. Its function is as follows. Involved in the gluconeogenesis. Catalyzes stereospecifically the conversion of dihydroxyacetone phosphate (DHAP) to D-glyceraldehyde-3-phosphate (G3P). This is Triosephosphate isomerase from Escherichia fergusonii (strain ATCC 35469 / DSM 13698 / CCUG 18766 / IAM 14443 / JCM 21226 / LMG 7866 / NBRC 102419 / NCTC 12128 / CDC 0568-73).